The following is a 410-amino-acid chain: Probable nicotinate phosphoribosyltransferase (410 aa).

Nicotinate is bound by residues Y15, F170, and T220. H223 carries the post-translational modification Phosphohistidine. T348 contacts 5-phospho-alpha-D-ribose 1-diphosphate.

It belongs to the NAPRTase family. Requires Mg(2+) as cofactor. Mn(2+) is required as a cofactor. Transiently phosphorylated on a His residue during the reaction cycle. Phosphorylation strongly increases the affinity for substrates and increases the rate of nicotinate D-ribonucleotide production. Dephosphorylation regenerates the low-affinity form of the enzyme, leading to product release.

It catalyses the reaction nicotinate + 5-phospho-alpha-D-ribose 1-diphosphate + ATP + H2O = nicotinate beta-D-ribonucleotide + ADP + phosphate + diphosphate. The protein operates within cofactor biosynthesis; NAD(+) biosynthesis; nicotinate D-ribonucleotide from nicotinate: step 1/1. In terms of biological role, catalyzes the first step in the biosynthesis of NAD from nicotinic acid, the ATP-dependent synthesis of beta-nicotinate D-ribonucleotide from nicotinate and 5-phospho-D-ribose 1-phosphate. Helps prevent cellular oxidative stress via its role in NAD biosynthesis. The sequence is that of Probable nicotinate phosphoribosyltransferase from Schizosaccharomyces pombe (strain 972 / ATCC 24843) (Fission yeast).